The sequence spans 206 residues: ATP-dependent Clp protease proteolytic subunit (206 aa).

The active-site Nucleophile is Ser-107. The active site involves His-132.

It belongs to the peptidase S14 family. As to quaternary structure, fourteen ClpP subunits assemble into 2 heptameric rings which stack back to back to give a disk-like structure with a central cavity, resembling the structure of eukaryotic proteasomes.

It localises to the cytoplasm. The enzyme catalyses Hydrolysis of proteins to small peptides in the presence of ATP and magnesium. alpha-casein is the usual test substrate. In the absence of ATP, only oligopeptides shorter than five residues are hydrolyzed (such as succinyl-Leu-Tyr-|-NHMec, and Leu-Tyr-Leu-|-Tyr-Trp, in which cleavage of the -Tyr-|-Leu- and -Tyr-|-Trp bonds also occurs).. In terms of biological role, cleaves peptides in various proteins in a process that requires ATP hydrolysis. Has a chymotrypsin-like activity. Plays a major role in the degradation of misfolded proteins. This chain is ATP-dependent Clp protease proteolytic subunit, found in Idiomarina loihiensis (strain ATCC BAA-735 / DSM 15497 / L2-TR).